A 270-amino-acid polypeptide reads, in one-letter code: Formamidopyrimidine-DNA glycosylase (270 aa).

Pro-2 serves as the catalytic Schiff-base intermediate with DNA. The active-site Proton donor is Glu-3. Lys-58 functions as the Proton donor; for beta-elimination activity in the catalytic mechanism. Positions 91, 110, and 151 each coordinate DNA. The FPG-type zinc finger occupies 236 to 270; that stretch reads AVYGREGEPCTHCGAPLQGVRIGGRATIYCSQCQR. The active-site Proton donor; for delta-elimination activity is the Arg-260.

The protein belongs to the FPG family. In terms of assembly, monomer. The cofactor is Zn(2+).

It carries out the reaction Hydrolysis of DNA containing ring-opened 7-methylguanine residues, releasing 2,6-diamino-4-hydroxy-5-(N-methyl)formamidopyrimidine.. The enzyme catalyses 2'-deoxyribonucleotide-(2'-deoxyribose 5'-phosphate)-2'-deoxyribonucleotide-DNA = a 3'-end 2'-deoxyribonucleotide-(2,3-dehydro-2,3-deoxyribose 5'-phosphate)-DNA + a 5'-end 5'-phospho-2'-deoxyribonucleoside-DNA + H(+). Its function is as follows. Involved in base excision repair of DNA damaged by oxidation or by mutagenic agents. Acts as a DNA glycosylase that recognizes and removes damaged bases. Has a preference for oxidized purines, such as 7,8-dihydro-8-oxoguanine (8-oxoG). Has AP (apurinic/apyrimidinic) lyase activity and introduces nicks in the DNA strand. Cleaves the DNA backbone by beta-delta elimination to generate a single-strand break at the site of the removed base with both 3'- and 5'-phosphates. This Acidithiobacillus ferrooxidans (strain ATCC 23270 / DSM 14882 / CIP 104768 / NCIMB 8455) (Ferrobacillus ferrooxidans (strain ATCC 23270)) protein is Formamidopyrimidine-DNA glycosylase.